A 395-amino-acid polypeptide reads, in one-letter code: uncharacterized protein (395 aa).

A disordered region spans residues 247–270; sequence GGTVVPPNPDQPNPTPPDSSSPNY. Residues 252-265 show a composition bias toward pro residues; it reads PPNPDQPNPTPPDS.

This is an uncharacterized protein from Vibrio cholerae serotype O1 (strain ATCC 39315 / El Tor Inaba N16961).